A 196-amino-acid chain; its full sequence is UMP-CMP kinase (196 aa).

13-18 is a binding site for ATP; it reads GAGKGT. The tract at residues 33–63 is NMP; sequence SAGDLLRDERKRPGSQYGELIENYIKEGEIV. A ribonucleoside 5'-phosphate contacts are provided by residues Arg-39, 61-63, and 93-96; these read EIV and GFPR. CMP is bound at residue Asn-100. Positions 133–143 are LID; sequence ERGKSSGRSDD. Arg-134 is an ATP binding site. Arg-140 and Arg-151 together coordinate a ribonucleoside 5'-phosphate. An ATP-binding site is contributed by Lys-179.

Belongs to the adenylate kinase family. UMP-CMP kinase subfamily. As to quaternary structure, monomer. Mg(2+) serves as cofactor.

The protein localises to the nucleus. The protein resides in the cytoplasm. It catalyses the reaction CMP + ATP = CDP + ADP. It carries out the reaction dCMP + ATP = dCDP + ADP. The catalysed reaction is UMP + ATP = UDP + ADP. The enzyme catalyses a 2'-deoxyribonucleoside 5'-diphosphate + ATP = a 2'-deoxyribonucleoside 5'-triphosphate + ADP. It catalyses the reaction a ribonucleoside 5'-diphosphate + ATP = a ribonucleoside 5'-triphosphate + ADP. In terms of biological role, catalyzes the phosphorylation of pyrimidine nucleoside monophosphates at the expense of ATP. Plays an important role in de novo pyrimidine nucleotide biosynthesis. Has preference for UMP and CMP as phosphate acceptors. Also displays broad nucleoside diphosphate kinase activity. The chain is UMP-CMP kinase (CMPK) from Gallus gallus (Chicken).